The primary structure comprises 1025 residues: RNA cytidine acetyltransferase (1025 aa).

287–296 (GRGKSAALGL) provides a ligand contact to ATP. The residue at position 426 (lysine 426) is an N6-acetyllysine. Position 470 (arginine 470) interacts with ATP. Residues 558–753 (CLLPPVPPTQ…HSCIMLKTLT (196 aa)) enclose the N-acetyltransferase domain. Acetyl-CoA-binding positions include 629–631 (IAV) and 636–642 (QGMGYGS). Residues 702–1025 (PAERLDYLGV…KKDMKLKRKK (324 aa)) form a required for localization to the nucleolus and midbody region. Threonine 716 carries the phosphothreonine modification. Arginine 725 contacts acetyl-CoA. 3 positions are modified to phosphoserine: serine 934, serine 984, and serine 987. A disordered region spans residues 990-1025 (SDKKRKLEAKQEPKQSKKLKNRETKNKKDMKLKRKK). Basic and acidic residues predominate over residues 997–1018 (EAKQEPKQSKKLKNRETKNKKD).

It belongs to the RNA cytidine acetyltransferase family. NAT10 subfamily. In terms of assembly, part of the small subunit (SSU) processome, composed of more than 70 proteins and the RNA chaperone small nucleolar RNA (snoRNA) U3. Interacts with THUMPD1. Interacts with SUN1 (via N-terminus). Interacts with TERT. Acetylation at Lys-426 is required to activation of rRNA transcription. May be autoacetylated; however ability to autoacetylate in vivo requires additional evidences.

It localises to the nucleus. The protein localises to the nucleolus. The protein resides in the midbody. The catalysed reaction is a cytidine in 18S rRNA + acetyl-CoA + ATP + H2O = an N(4)-acetylcytidine in 18S rRNA + ADP + phosphate + CoA + H(+). The enzyme catalyses a cytidine in tRNA + acetyl-CoA + ATP + H2O = an N(4)-acetylcytidine in tRNA + ADP + phosphate + CoA + H(+). It catalyses the reaction a cytidine in mRNA + acetyl-CoA + ATP + H2O = an N(4)-acetylcytidine in mRNA + ADP + phosphate + CoA + H(+). With respect to regulation, specifically inhibited by remodelin (4-[2-(2-cyclopentylidenehydrazinyl)-4-thiazolyl]-benzonitrile, monohydrobromide), a hydrobromide salt molecule. Remodelin can improve nuclear architecture, chromatin organization and fitness of cells from patients suffering from Hutchinson-Gilford progeria syndrome (HGPS); molecular mechanisms explaining the relation between NAT10 activity and nuclear architecture are however unclear. Functionally, RNA cytidine acetyltransferase that catalyzes the formation of N(4)-acetylcytidine (ac4C) modification on mRNAs, 18S rRNA and tRNAs. Catalyzes ac4C modification of a broad range of mRNAs, enhancing mRNA stability and translation. mRNA ac4C modification is frequently present within wobble cytidine sites and promotes translation efficiency. Mediates the formation of ac4C at position 1842 in 18S rRNA. May also catalyze the formation of ac4C at position 1337 in 18S rRNA. Required for early nucleolar cleavages of precursor rRNA at sites A0, A1 and A2 during 18S rRNA synthesis. Catalyzes the formation of ac4C in serine and leucine tRNAs. Requires the tRNA-binding adapter protein THUMPD1 for full tRNA acetyltransferase activity but not for 18S rRNA acetylation. In addition to RNA acetyltransferase activity, also able to acetylate lysine residues of proteins, such as histones, microtubules, p53/TP53 and MDM2, in vitro. The relevance of the protein lysine acetyltransferase activity is however unsure in vivo. Activates telomerase activity by stimulating the transcription of TERT, and may also regulate telomerase function by affecting the balance of telomerase subunit assembly, disassembly, and localization. Involved in the regulation of centrosome duplication by acetylating CENATAC during mitosis, promoting SASS6 proteasome degradation. Part of the small subunit (SSU) processome, first precursor of the small eukaryotic ribosomal subunit. During the assembly of the SSU processome in the nucleolus, many ribosome biogenesis factors, an RNA chaperone and ribosomal proteins associate with the nascent pre-rRNA and work in concert to generate RNA folding, modifications, rearrangements and cleavage as well as targeted degradation of pre-ribosomal RNA by the RNA exosome. The sequence is that of RNA cytidine acetyltransferase from Homo sapiens (Human).